The following is a 57-amino-acid chain: uncharacterized protein (57 aa).

Residues 34–51 (TALLDAAAVVVVPGLLAA) form a helical membrane-spanning segment.

It localises to the membrane. This is an uncharacterized protein from Dictyostelium discoideum (Social amoeba).